A 153-amino-acid polypeptide reads, in one-letter code: SsrA-binding protein (153 aa).

The disordered stretch occupies residues 129–153 (KREDMKKKDQSREMAQALRERSKSH).

This sequence belongs to the SmpB family.

It is found in the cytoplasm. In terms of biological role, required for rescue of stalled ribosomes mediated by trans-translation. Binds to transfer-messenger RNA (tmRNA), required for stable association of tmRNA with ribosomes. tmRNA and SmpB together mimic tRNA shape, replacing the anticodon stem-loop with SmpB. tmRNA is encoded by the ssrA gene; the 2 termini fold to resemble tRNA(Ala) and it encodes a 'tag peptide', a short internal open reading frame. During trans-translation Ala-aminoacylated tmRNA acts like a tRNA, entering the A-site of stalled ribosomes, displacing the stalled mRNA. The ribosome then switches to translate the ORF on the tmRNA; the nascent peptide is terminated with the 'tag peptide' encoded by the tmRNA and targeted for degradation. The ribosome is freed to recommence translation, which seems to be the essential function of trans-translation. This chain is SsrA-binding protein, found in Geobacter metallireducens (strain ATCC 53774 / DSM 7210 / GS-15).